Reading from the N-terminus, the 477-residue chain is Glycogen synthase (477 aa).

Lysine 15 is a binding site for ADP-alpha-D-glucose.

The protein belongs to the glycosyltransferase 1 family. Bacterial/plant glycogen synthase subfamily.

It catalyses the reaction [(1-&gt;4)-alpha-D-glucosyl](n) + ADP-alpha-D-glucose = [(1-&gt;4)-alpha-D-glucosyl](n+1) + ADP + H(+). Its pathway is glycan biosynthesis; glycogen biosynthesis. In terms of biological role, synthesizes alpha-1,4-glucan chains using ADP-glucose. The protein is Glycogen synthase of Streptococcus pneumoniae serotype 4 (strain ATCC BAA-334 / TIGR4).